A 147-amino-acid chain; its full sequence is Hemoglobin subunit beta-2 (147 aa).

Valine 2 carries the N-acetylvaline modification. The 145-residue stretch at 3 to 147 folds into the Globin domain; that stretch reads HLTDAEKATV…VASALAHKYH (145 aa). Serine 13 is modified (phosphoserine). N6-succinyllysine is present on lysine 18. A phosphoserine mark is found at serine 51 and serine 53. The heme b site is built by histidine 64 and histidine 93. The residue at position 105 (arginine 105) is an Asymmetric dimethylarginine. A Phosphothreonine modification is found at threonine 124. Cysteine 126 is subject to Phosphoserine; in variant Ser-126.

The protein belongs to the globin family. In terms of assembly, heterotetramer of two alpha chains and two beta chains. As to expression, red blood cells.

Involved in oxygen transport from the lung to the various peripheral tissues. In Rattus norvegicus (Rat), this protein is Hemoglobin subunit beta-2.